The primary structure comprises 117 residues: MAGLVKLSCLVLACMIVAGPIATNAALSCGTVSGNLAACIGYLTQNGPVPTACCSGVTSLNNMARTTPDRQQACRCLVGAANALPTINVARAAGLPKACGVNIPYKISKTTNCNSVK.

The signal sequence occupies residues 1–25 (MAGLVKLSCLVLACMIVAGPIATNA). 4 cysteine pairs are disulfide-bonded: Cys-29-Cys-76, Cys-39-Cys-53, Cys-54-Cys-99, and Cys-74-Cys-113.

Belongs to the plant LTP family.

In terms of biological role, plant non-specific lipid-transfer proteins transfer phospholipids as well as galactolipids across membranes. May play a role in wax or cutin deposition in the cell walls of expanding epidermal cells and certain secretory tissues. The protein is Non-specific lipid-transfer protein 3 (LTP3) of Brassica napus (Rape).